The primary structure comprises 104 residues: uncharacterized protein (104 aa).

This is an uncharacterized protein from Mycobacterium tuberculosis (strain ATCC 25618 / H37Rv).